A 426-amino-acid polypeptide reads, in one-letter code: Serine--tRNA ligase (426 aa).

229–231 (TAE) provides a ligand contact to L-serine. Residue 260–262 (RSE) participates in ATP binding. Residue Glu283 coordinates L-serine. 347-350 (EIAS) serves as a coordination point for ATP. An L-serine-binding site is contributed by Ser383.

The protein belongs to the class-II aminoacyl-tRNA synthetase family. Type-1 seryl-tRNA synthetase subfamily. Homodimer. The tRNA molecule binds across the dimer.

Its subcellular location is the cytoplasm. It catalyses the reaction tRNA(Ser) + L-serine + ATP = L-seryl-tRNA(Ser) + AMP + diphosphate + H(+). The enzyme catalyses tRNA(Sec) + L-serine + ATP = L-seryl-tRNA(Sec) + AMP + diphosphate + H(+). It functions in the pathway aminoacyl-tRNA biosynthesis; selenocysteinyl-tRNA(Sec) biosynthesis; L-seryl-tRNA(Sec) from L-serine and tRNA(Sec): step 1/1. Its function is as follows. Catalyzes the attachment of serine to tRNA(Ser). Is also able to aminoacylate tRNA(Sec) with serine, to form the misacylated tRNA L-seryl-tRNA(Sec), which will be further converted into selenocysteinyl-tRNA(Sec). This is Serine--tRNA ligase from Rickettsia bellii (strain OSU 85-389).